A 240-amino-acid polypeptide reads, in one-letter code: Predicted GPI-anchored protein 58 (240 aa).

The first 18 residues, 1-18 (MQFSTLVSLAAVIVSTNA), serve as a signal peptide directing secretion. Residues 41–216 (HTNCPASSPA…NSTGPSSVPT (176 aa)) form a disordered region. Residues 51–86 (TPAPAPSASAPAPPAPEQPEPSAPAPAPSAPAPEQP) are compositionally biased toward pro residues. Low complexity predominate over residues 87–103 (EQPATPATPAAPATPAT). Composition is skewed to pro residues over residues 104–137 (PAAP…PEQP) and 153–192 (APAP…PAPS). Residues 193–216 (APASVPEQPASSVSNSTGPSSVPT) show a composition bias toward low complexity. Residue N207 is glycosylated (N-linked (GlcNAc...) asparagine). G219 carries the GPI-anchor amidated glycine lipid modification. A propeptide spans 220-240 (AAAKQYITGSVAVIAAALLAL) (removed in mature form).

Its subcellular location is the cell membrane. The chain is Predicted GPI-anchored protein 58 (PGA58) from Candida albicans (strain SC5314 / ATCC MYA-2876) (Yeast).